Reading from the N-terminus, the 527-residue chain is Cyclin-L1 (527 aa).

The tract at residues 1-37 is disordered; the sequence is MASGPHPTSTAAAASASSAAPSAGGSSSGTTTTTTTT. Cyclin-like regions lie at residues 89–191 and 204–288; these read ELIQ…RVLK and KIIV…ETLR. Thr-326 is modified (phosphothreonine). The interval 327–527 is disordered; the sequence is PALSTLGGFS…SRSGHGRHRR (201 aa). A phosphoserine mark is found at Ser-336 and Ser-339. Glycyl lysine isopeptide (Lys-Gly) (interchain with G-Cter in SUMO2) cross-links involve residues Lys-340 and Lys-348. A compositionally biased stretch (basic and acidic residues) spans 343–353; it reads SPREVKAEEKS. Residues Ser-353 and Ser-356 each carry the phosphoserine modification. A compositionally biased stretch (basic and acidic residues) spans 362–371; sequence VKKEPEDRQQ. Lys-363 participates in a covalent cross-link: Glycyl lysine isopeptide (Lys-Gly) (interchain with G-Cter in SUMO2). Ser-375 is modified (phosphoserine). Basic residues-rich tracts occupy residues 383 to 419, 439 to 453, 461 to 477, and 487 to 499; these read DSKR…RRSR, RRHH…KAKH, SNRH…RSQS, and KKHR…HRDR. Positions 391 to 433 are RS; sequence RSASRSRSRTRSRSRSHTPRRHYNNRRSRSGTYSSRSRSRSRS. At Ser-446 the chain carries Phosphoserine. Basic and acidic residues predominate over residues 500-509; sequence RERSRSFERS. The span at 510-527 shows a compositional bias: basic residues; sequence HKGKHHGGSRSGHGRHRR.

This sequence belongs to the cyclin family. Cyclin L subfamily. Interacts with POLR2A via its hyperphosphorylated C-terminal domain (CTD). Interacts with CDK11A, CDK11B, CDK12 and CDK13. May form a ternary complex with CDK11B and casein kinase II (CKII). Interacts with pre-mRNA-splicing factors, including at least SRSF1, SRSF2 AND SRSF7/SLU7. In terms of tissue distribution, ubiquitous with higher level in liver; expressed in striatal neurons.

The protein localises to the nucleus speckle. The protein resides in the nucleus. It localises to the nucleoplasm. Involved in pre-mRNA splicing. Functions in association with cyclin-dependent kinases (CDKs). May play a role in the regulation of RNA polymerase II (pol II). Inhibited by the CDK-specific inhibitor CDKN1A/p21. This chain is Cyclin-L1 (Ccnl1), found in Rattus norvegicus (Rat).